A 241-amino-acid chain; its full sequence is 1-(5-phosphoribosyl)-5-[(5-phosphoribosylamino)methylideneamino] imidazole-4-carboxamide isomerase (241 aa).

D8 (proton acceptor) is an active-site residue. The active-site Proton donor is D127.

The protein belongs to the HisA/HisF family.

It is found in the cytoplasm. It catalyses the reaction 1-(5-phospho-beta-D-ribosyl)-5-[(5-phospho-beta-D-ribosylamino)methylideneamino]imidazole-4-carboxamide = 5-[(5-phospho-1-deoxy-D-ribulos-1-ylimino)methylamino]-1-(5-phospho-beta-D-ribosyl)imidazole-4-carboxamide. The protein operates within amino-acid biosynthesis; L-histidine biosynthesis; L-histidine from 5-phospho-alpha-D-ribose 1-diphosphate: step 4/9. The protein is 1-(5-phosphoribosyl)-5-[(5-phosphoribosylamino)methylideneamino] imidazole-4-carboxamide isomerase of Thermotoga petrophila (strain ATCC BAA-488 / DSM 13995 / JCM 10881 / RKU-1).